A 272-amino-acid chain; its full sequence is NH(3)-dependent NAD(+) synthetase (272 aa).

45-52 (GISGGQDS) contributes to the ATP binding site. A Mg(2+)-binding site is contributed by Asp-51. Arg-138 provides a ligand contact to deamido-NAD(+). An ATP-binding site is contributed by Thr-158. Glu-163 contacts Mg(2+). The deamido-NAD(+) site is built by Lys-171 and Asp-178. 2 residues coordinate ATP: Lys-187 and Thr-209. Residue 258–259 (HK) participates in deamido-NAD(+) binding.

Belongs to the NAD synthetase family. Homodimer.

The catalysed reaction is deamido-NAD(+) + NH4(+) + ATP = AMP + diphosphate + NAD(+) + H(+). Its pathway is cofactor biosynthesis; NAD(+) biosynthesis; NAD(+) from deamido-NAD(+) (ammonia route): step 1/1. Catalyzes the ATP-dependent amidation of deamido-NAD to form NAD. Uses ammonia as a nitrogen source. In Bacillus cereus (strain AH187), this protein is NH(3)-dependent NAD(+) synthetase.